The following is a 491-amino-acid chain: Katanin p60 ATPase-containing subunit A1 (491 aa).

An interaction with KATNB1 region spans residues 1–29; that stretch reads MSLLMITENVKLAREYALLGNYDSAMVYY. The interval 1 to 75 is interaction with dynein and NDEL1; it reads MSLLMITENV…VKEIMKTLES (75 aa). Residues 1 to 185 form an interaction with microtubules region; the sequence is MSLLMITENV…EPEANKFDST (185 aa). Position 42 is a phosphoserine; by DYRK2 (Ser-42). A disordered region spans residues 87 to 183; sequence QHELPSSEGE…VTEPEANKFD (97 aa). A compositionally biased stretch (basic and acidic residues) spans 145 to 169; that stretch reads HSDRGKAVRSREKKEQSKGREEKNK. 249 to 256 provides a ligand contact to ATP; sequence GPPGTGKT.

It belongs to the AAA ATPase family. Katanin p60 subunit A1 subfamily. In terms of assembly, can homooligomerize into hexameric rings, which may be promoted by interaction with microtubules. Interacts with KATNB1, which may serve as a targeting subunit. Interacts with ASPM; the katanin complex formation KATNA1:KATNB1 is required for the association of ASPM. Interacts with dynein and NDEL1. Associates with the E3 ligase complex containing DYRK2, EDD/UBR5, DDB1 and DCAF1 proteins (EDVP complex). Interacts with KLHL42 (via the kelch domains). Interacts with CUL3; the interaction is enhanced by KLHL42. Interacts with KATNB1 and KATNBL1. Phosphorylation by DYRK2 triggers ubiquitination and subsequent degradation. Post-translationally, ubiquitinated by the BCR(KLHL42) E3 ubiquitin ligase complex, leading to its proteasomal degradation. Ubiquitinated by the EDVP E3 ligase complex and subsequently targeted for proteasomal degradation.

It localises to the cytoplasm. The protein resides in the midbody. Its subcellular location is the cytoskeleton. It is found in the microtubule organizing center. The protein localises to the centrosome. It localises to the spindle pole. The protein resides in the spindle. The catalysed reaction is n ATP + n H2O + a microtubule = n ADP + n phosphate + (n+1) alpha/beta tubulin heterodimers.. With respect to regulation, ATPase activity is stimulated by microtubules, which promote homooligomerization. ATP-dependent microtubule severing is stimulated by interaction with KATNB1. Its function is as follows. Catalytic subunit of a complex which severs microtubules in an ATP-dependent manner. Microtubule severing may promote rapid reorganization of cellular microtubule arrays and the release of microtubules from the centrosome following nucleation. Microtubule release from the mitotic spindle poles may allow depolymerization of the microtubule end proximal to the spindle pole, leading to poleward microtubule flux and poleward motion of chromosome. Microtubule release within the cell body of neurons may be required for their transport into neuronal processes by microtubule-dependent motor proteins. This transport is required for axonal growth. The polypeptide is Katanin p60 ATPase-containing subunit A1 (Katna1) (Rattus norvegicus (Rat)).